A 261-amino-acid chain; its full sequence is Proliferating cell nuclear antigen (261 aa).

The DNA-binding element occupies 61–80 (RCDRNQSIGVKMSSMSKILK). A Glycyl lysine isopeptide (Lys-Gly) (interchain with G-Cter in ubiquitin) cross-link involves residue lysine 164.

Belongs to the PCNA family. Homotrimer. Forms a complex with activator 1 heteropentamer in the presence of ATP. Component of the replisome complex. Interacts with apex2.L (via PIP box and GRF-type Zinc finger domain); the interaction is required for 3'-5' single-strand break (SSB) end resection, assembly of a checkpoint protein complex to SSB sites, and SSB signaling. Monoubiquitinated by the ube2b-rad18 complex on Lys-164. Monoubiquitination at Lys-164 also takes place in undamaged proliferating cells, and is mediated by the dcx(dtl) complex, leading to enhance PCNA-dependent translesion DNA synthesis.

It localises to the nucleus. This protein is an auxiliary protein of DNA polymerase delta and is involved in the control of eukaryotic DNA replication by increasing the polymerase's processibility during elongation of the leading strand. Promotes 3'-5' nuclease activity of the DNA-endonuclease apex2.L in response to DNA damage. The protein is Proliferating cell nuclear antigen (pcna) of Xenopus laevis (African clawed frog).